The sequence spans 199 residues: Recombination protein RecR (199 aa).

A C4-type zinc finger spans residues 60 to 75 (CARCHTFTEGEVCSTC). One can recognise a Toprim domain in the interval 83–178 (SRLAVVETPA…HVTRLARGVP (96 aa)).

It belongs to the RecR family.

Functionally, may play a role in DNA repair. It seems to be involved in an RecBC-independent recombinational process of DNA repair. It may act with RecF and RecO. The polypeptide is Recombination protein RecR (Paracidovorax citrulli (strain AAC00-1) (Acidovorax citrulli)).